Here is a 229-residue protein sequence, read N- to C-terminus: NAD(P)H-hydrate epimerase (229 aa).

One can recognise a YjeF N-terminal domain in the interval 9 to 216; that stretch reads AISVDEELFN…KLEEKYAMNL (208 aa). 59-63 is a (6S)-NADPHX binding site; the sequence is NNGGD. Residues N60 and D124 each coordinate K(+). (6S)-NADPHX contacts are provided by residues 128–134 and D157; that span reads GFSFKPP. Residue S160 coordinates K(+).

This sequence belongs to the NnrE/AIBP family. K(+) is required as a cofactor.

The enzyme catalyses (6R)-NADHX = (6S)-NADHX. It catalyses the reaction (6R)-NADPHX = (6S)-NADPHX. Its function is as follows. Catalyzes the epimerization of the S- and R-forms of NAD(P)HX, a damaged form of NAD(P)H that is a result of enzymatic or heat-dependent hydration. This is a prerequisite for the S-specific NAD(P)H-hydrate dehydratase to allow the repair of both epimers of NAD(P)HX. The chain is NAD(P)H-hydrate epimerase from Anopheles gambiae (African malaria mosquito).